Here is a 710-residue protein sequence, read N- to C-terminus: Polyribonucleotide nucleotidyltransferase (710 aa).

D489 and D495 together coordinate Mg(2+). The region spanning 556–615 is the KH domain; sequence PKIDTIKIDVDKIKVVIGKGGETIDKIIAETGVKIDIDDEGNVSIYSSDQAAINRTKEII. Residues 625 to 693 form the S1 motif domain; that stretch reads GEVYHAKVVR…EKGRVDASMK (69 aa). The interval 691–710 is disordered; it reads SMKALIPRPPKPEKKEEKHD. Residues 700 to 710 are compositionally biased toward basic and acidic residues; it reads PKPEKKEEKHD.

Belongs to the polyribonucleotide nucleotidyltransferase family. It depends on Mg(2+) as a cofactor.

It is found in the cytoplasm. It carries out the reaction RNA(n+1) + phosphate = RNA(n) + a ribonucleoside 5'-diphosphate. Functionally, involved in mRNA degradation. Catalyzes the phosphorolysis of single-stranded polyribonucleotides processively in the 3'- to 5'-direction. This Streptococcus pyogenes serotype M2 (strain MGAS10270) protein is Polyribonucleotide nucleotidyltransferase.